An 863-amino-acid polypeptide reads, in one-letter code: Leucine--tRNA ligase (863 aa).

The short motif at 42–52 (PYPSGRLHMGH) is the 'HIGH' region element. A 'KMSKS' region motif is present at residues 622–626 (KMSKS). K625 is an ATP binding site.

This sequence belongs to the class-I aminoacyl-tRNA synthetase family.

It localises to the cytoplasm. It carries out the reaction tRNA(Leu) + L-leucine + ATP = L-leucyl-tRNA(Leu) + AMP + diphosphate. The chain is Leucine--tRNA ligase from Shewanella loihica (strain ATCC BAA-1088 / PV-4).